Reading from the N-terminus, the 439-residue chain is Tol-Pal system protein TolB (439 aa).

Positions 1–21 (MRFRLALSLLSLALFAAPAAA) are cleaved as a signal peptide.

The protein belongs to the TolB family. As to quaternary structure, the Tol-Pal system is composed of five core proteins: the inner membrane proteins TolA, TolQ and TolR, the periplasmic protein TolB and the outer membrane protein Pal. They form a network linking the inner and outer membranes and the peptidoglycan layer.

The protein resides in the periplasm. In terms of biological role, part of the Tol-Pal system, which plays a role in outer membrane invagination during cell division and is important for maintaining outer membrane integrity. This chain is Tol-Pal system protein TolB, found in Rhizorhabdus wittichii (strain DSM 6014 / CCUG 31198 / JCM 15750 / NBRC 105917 / EY 4224 / RW1) (Sphingomonas wittichii).